Consider the following 235-residue polypeptide: CD-NTase-associated protein 13 (235 aa).

2 consecutive transmembrane segments (helical) span residues 14–34 (IVHH…LIWI) and 45–65 (IIFT…IVGL).

This sequence in the C-terminal section; belongs to the bacterial STING family. As to quaternary structure, homodimer.

The protein resides in the cell inner membrane. In terms of biological role, effector protein of a CBASS antivirus system. CBASS (cyclic oligonucleotide-based antiphage signaling system) provides immunity against bacteriophage. The CD-NTase protein synthesizes cyclic nucleotides in response to infection; these serve as specific second messenger signals. The signals activate a diverse range of effectors, leading to bacterial cell death and thus abortive phage infection. A type I-D(GG) CBASS system. Binds cyclic dinucleotides: binds c-di-GMP (synthesized by the cognate CdnE encoded upstream in the same operon), cyclic 3'3'-cyclic GMP-AMP (3'3'-cGAMP) but not cUMP-AMP. The effector protein for this CBASS system, its activity is stimulated by c-di-GMP and leads to cell death. This Flavobacteriaceae sp. genome_bin_11 protein is CD-NTase-associated protein 13.